The following is an 83-amino-acid chain: Putative defensin-like protein 67 (83 aa).

The signal sequence occupies residues 1 to 24 (MGSSKLMVTCIVVAMLTISCDILS). 4 disulfide bridges follow: Cys-38-Cys-82, Cys-42-Cys-65, Cys-51-Cys-80, and Cys-55-Cys-81.

It belongs to the DEFL family.

Its subcellular location is the secreted. The chain is Putative defensin-like protein 67 from Arabidopsis thaliana (Mouse-ear cress).